The chain runs to 813 residues: Cadherin-22 (813 aa).

Residues 1-33 (MRPRPAGALRAGAALSPVLLLLLLLQLLGHLWA) form the signal peptide. The Extracellular portion of the chain corresponds to 34-621 (ASTPAPSSLS…AFVMAASLSP (588 aa)). 5 consecutive Cadherin domains span residues 61 to 165 (WVWN…EPRF), 166 to 274 (LHGP…PPRF), 275 to 391 (PQKM…PPEF), 392 to 495 (RPPS…NPPE), and 496 to 613 (LATP…TTAF). The N-linked (GlcNAc...) asparagine glycan is linked to N159. 2 N-linked (GlcNAc...) asparagine glycosylation sites follow: N463 and N609. The chain crosses the membrane as a helical span at residues 622–642 (GALIALLVCVLILVVLALLIL). At 643–813 (TLRRHHKSHL…HRGDDEAPAS (171 aa)) the chain is on the cytoplasmic side. The interval 696-726 (GGDPGGGAASPPQAASSSERHSLPRGPSSPE) is disordered.

Strongly expressed in the pituitary gland and the brain (in the inner granular and glomerular layers of the olfactory bulb, anterior olfactory nucleus, primary olfactory cortex, Purkinje cell layer of cerebellum, and pineal gland). Low expression in lung and heart. No expression in submandibular gland, thymus, liver, spleen, adrenal, and kidney.

The protein localises to the cell membrane. Functionally, cadherins are calcium-dependent cell adhesion proteins. They preferentially interact with themselves in a homophilic manner in connecting cells; cadherins may thus contribute to the sorting of heterogeneous cell types. PB-cadherins may have a role in the morphological organization of pituitary gland and brain tissues. This is Cadherin-22 (Cdh22) from Rattus norvegicus (Rat).